A 355-amino-acid chain; its full sequence is D-alanine--D-alanine ligase (355 aa).

The ATP-grasp domain maps to 143–350; sequence KTIFSNLKIP…IEQLVAKLVD (208 aa). 178-233 contacts ATP; sequence LKKLNFPFFVKPSNSGSSLGISKVINESEILQSLEKAQKIDSRILVEEGLEVREIE. Mg(2+) is bound by residues D303, E317, and N319.

The protein belongs to the D-alanine--D-alanine ligase family. The cofactor is Mg(2+). Mn(2+) is required as a cofactor.

It localises to the cytoplasm. It carries out the reaction 2 D-alanine + ATP = D-alanyl-D-alanine + ADP + phosphate + H(+). The protein operates within cell wall biogenesis; peptidoglycan biosynthesis. In terms of biological role, cell wall formation. This is D-alanine--D-alanine ligase from Prochlorococcus marinus (strain MIT 9215).